A 100-amino-acid chain; its full sequence is Aspartyl/glutamyl-tRNA(Asn/Gln) amidotransferase subunit C (100 aa).

The protein belongs to the GatC family. As to quaternary structure, heterotrimer of A, B and C subunits.

It carries out the reaction L-glutamyl-tRNA(Gln) + L-glutamine + ATP + H2O = L-glutaminyl-tRNA(Gln) + L-glutamate + ADP + phosphate + H(+). It catalyses the reaction L-aspartyl-tRNA(Asn) + L-glutamine + ATP + H2O = L-asparaginyl-tRNA(Asn) + L-glutamate + ADP + phosphate + 2 H(+). In terms of biological role, allows the formation of correctly charged Asn-tRNA(Asn) or Gln-tRNA(Gln) through the transamidation of misacylated Asp-tRNA(Asn) or Glu-tRNA(Gln) in organisms which lack either or both of asparaginyl-tRNA or glutaminyl-tRNA synthetases. The reaction takes place in the presence of glutamine and ATP through an activated phospho-Asp-tRNA(Asn) or phospho-Glu-tRNA(Gln). The protein is Aspartyl/glutamyl-tRNA(Asn/Gln) amidotransferase subunit C of Streptococcus pneumoniae (strain JJA).